The sequence spans 336 residues: Glucan endo-1,3-beta-glucosidase A (336 aa).

An N-terminal signal peptide occupies residues 1–23; it reads MAFLSSLLASLLLVGLLIQITGA. Position 24 is a pyrrolidone carboxylic acid (Gln-24). The Proton donor role is filled by Glu-118. The active-site Nucleophile is Glu-257.

This sequence belongs to the glycosyl hydrolase 17 family.

The protein localises to the secreted. The protein resides in the extracellular space. It catalyses the reaction Hydrolysis of (1-&gt;3)-beta-D-glucosidic linkages in (1-&gt;3)-beta-D-glucans.. In terms of biological role, implicated in the defense of plants against pathogens. This Solanum lycopersicum (Tomato) protein is Glucan endo-1,3-beta-glucosidase A.